Here is a 57-residue protein sequence, read N- to C-terminus: Large ribosomal subunit protein bL32 (57 aa).

A disordered region spans residues 1-38; it reads MAVQQNKPTRSKRGMRRSHDALTAVTSLSVDKTSGEKH.

This sequence belongs to the bacterial ribosomal protein bL32 family.

In Escherichia coli O7:K1 (strain IAI39 / ExPEC), this protein is Large ribosomal subunit protein bL32.